Consider the following 297-residue polypeptide: MAEISAKLVKELRDKTGAGMMDCKKALQESNGDMEAAITWLRQKGLASAGKKAGRVTSEGLVDSYIHTGGRIGVLVEVNCETDFVARNEKFKTLVQDIAKQIAACPNVEFVSLDDIPAEYKEKERQIALGSDALKGKPPEVQEKIVAGKLEKTLKELCLLYQPFIRDQSKTVEELVKEHIAELGENIRIRRFQRFVLGEGIEKQETNLAEEVAAQTQAMRAAAQTAAAAETAPPEVSEPEPAAAVTAEEPTPEPVAAAEQPAEPVSELVEQPGAESKGFGAATKKSGGKSRSNKKKK.

Positions 82–85 are involved in Mg(2+) ion dislocation from EF-Tu; sequence TDFV. The span at 223–265 shows a compositional bias: low complexity; sequence AQTAAAAETAPPEVSEPEPAAAVTAEEPTPEPVAAAEQPAEPV. The interval 223 to 297 is disordered; sequence AQTAAAAETA…GKSRSNKKKK (75 aa). Basic residues predominate over residues 286–297; that stretch reads SGGKSRSNKKKK.

This sequence belongs to the EF-Ts family.

It is found in the cytoplasm. Associates with the EF-Tu.GDP complex and induces the exchange of GDP to GTP. It remains bound to the aminoacyl-tRNA.EF-Tu.GTP complex up to the GTP hydrolysis stage on the ribosome. In Thermosynechococcus vestitus (strain NIES-2133 / IAM M-273 / BP-1), this protein is Elongation factor Ts.